The primary structure comprises 650 residues: Gamma-tubulin complex component 4 homolog (650 aa).

A Phosphoserine modification is found at Ser214. Phosphothreonine is present on Thr216. A Phosphoserine modification is found at Ser218.

The protein belongs to the TUBGCP family.

The protein resides in the cytoplasm. The protein localises to the cytoskeleton. It localises to the microtubule organizing center. It is found in the centrosome. Functionally, gamma-tubulin complex is necessary for microtubule nucleation at the centrosome. The protein is Gamma-tubulin complex component 4 homolog (Grip75) of Drosophila melanogaster (Fruit fly).